The sequence spans 710 residues: Secretin OutD (710 aa).

An N-terminal signal peptide occupies residues 1–27; that stretch reads MLGKGIKKSWGWLGLTVLLLGSPCGWA. The tract at residues 28 to 105 is N0; it reads AEFSASFKGT…DNGVLKVIRS (78 aa). Positions 123 to 190 are N1; the sequence is IGDELVTRVV…DIVNTVDKTG (68 aa). Positions 192–262 are N2; the sequence is REMVTVPLTY…VEMIRQLDRK (71 aa). The interval 288–399 is N3; the sequence is GNGTSGNRNS…INQLDIRRPQ (112 aa). The interval 289–353 is disordered; that stretch reads NGTSGNRNSS…AFGSTSSSGG (65 aa). The interval 401–648 is secretin; the sequence is LVEAIIAEIQ…MLFLRPTIIR (248 aa). Residues 691–710 are s domain; that stretch reads TYTFRQVQSSISDFYKPEGR.

It belongs to the bacterial secretin family. GSP D subfamily. Forms a cylindrical channel with 15 subunits. Interacts with pilotin OutS.

The protein localises to the cell outer membrane. Involved in a type II secretion system (T2SS, formerly general secretion pathway, GSP) for the export of proteins. Required for the translocation of the multiple pectic enzymes. This subunit forms the outer membrane channel. The sequence is that of Secretin OutD (outD) from Dickeya dadantii (strain 3937) (Erwinia chrysanthemi (strain 3937)).